Here is a 207-residue protein sequence, read N- to C-terminus: Cytochrome c biogenesis ATP-binding export protein CcmA (207 aa).

The 203-residue stretch at 2-204 (LEVKNLTAIR…NPKLRKIRLG (203 aa)) folds into the ABC transporter domain. Residue 34-41 (GRNGTGKT) participates in ATP binding.

Belongs to the ABC transporter superfamily. CcmA exporter (TC 3.A.1.107) family. The complex is composed of two ATP-binding proteins (CcmA) and two transmembrane proteins (CcmB).

It localises to the cell inner membrane. The enzyme catalyses heme b(in) + ATP + H2O = heme b(out) + ADP + phosphate + H(+). Part of the ABC transporter complex CcmAB involved in the biogenesis of c-type cytochromes; once thought to export heme, this seems not to be the case, but its exact role is uncertain. Responsible for energy coupling to the transport system. The polypeptide is Cytochrome c biogenesis ATP-binding export protein CcmA (Vibrio cholerae serotype O1 (strain ATCC 39315 / El Tor Inaba N16961)).